The primary structure comprises 89 residues: Small ribosomal subunit protein uS14 (89 aa).

Belongs to the universal ribosomal protein uS14 family. In terms of assembly, part of the 30S ribosomal subunit. Contacts proteins S3 and S10.

Its function is as follows. Binds 16S rRNA, required for the assembly of 30S particles and may also be responsible for determining the conformation of the 16S rRNA at the A site. This chain is Small ribosomal subunit protein uS14, found in Flavobacterium johnsoniae (strain ATCC 17061 / DSM 2064 / JCM 8514 / BCRC 14874 / CCUG 350202 / NBRC 14942 / NCIMB 11054 / UW101) (Cytophaga johnsonae).